We begin with the raw amino-acid sequence, 103 residues long: Signal recognition particle 19 kDa protein (103 aa).

This sequence belongs to the SRP19 family. Part of the signal recognition particle protein translocation system, which is composed of SRP and FtsY. Archaeal SRP consists of a 7S RNA molecule of 300 nucleotides and two protein subunits: SRP54 and SRP19.

The protein resides in the cytoplasm. Functionally, involved in targeting and insertion of nascent membrane proteins into the cytoplasmic membrane. Binds directly to 7S RNA and mediates binding of the 54 kDa subunit of the SRP. The polypeptide is Signal recognition particle 19 kDa protein (Methanopyrus kandleri (strain AV19 / DSM 6324 / JCM 9639 / NBRC 100938)).